The chain runs to 430 residues: Serine/threonine transporter SstT (430 aa).

Helical transmembrane passes span 24-44 (IIVG…VTWI), 47-67 (FGTL…FVLV), 82-102 (FGTV…VAVL), 144-164 (AIID…GLAM), 186-206 (VIRW…FTNV), 223-243 (LLVG…IFIF), 294-314 (IPLG…IMAM), 320-340 (LGIQ…ALGA), and 361-381 (FGIS…IGVI).

It belongs to the dicarboxylate/amino acid:cation symporter (DAACS) (TC 2.A.23) family.

The protein resides in the cell membrane. It catalyses the reaction L-serine(in) + Na(+)(in) = L-serine(out) + Na(+)(out). The enzyme catalyses L-threonine(in) + Na(+)(in) = L-threonine(out) + Na(+)(out). In terms of biological role, involved in the import of serine and threonine into the cell, with the concomitant import of sodium (symport system). This Bifidobacterium adolescentis (strain ATCC 15703 / DSM 20083 / NCTC 11814 / E194a) protein is Serine/threonine transporter SstT.